A 437-amino-acid chain; its full sequence is Transcription factor TGAL5 (437 aa).

A disordered region spans residues 33-75; sequence QEPYSNSQSVGSTTDSSSAQNTMSQAELVSPASMRSDSGQEQQ. A compositionally biased stretch (low complexity) spans 37 to 50; that stretch reads SNSQSVGSTTDSSS. Residues 51–75 show a composition bias toward polar residues; that stretch reads AQNTMSQAELVSPASMRSDSGQEQQ. The bZIP domain maps to 126 to 170; that stretch reads DAKTERRLAQNREAARKSRLRKKAYVQQLETSRIRLQQIEQELQR. The tract at residues 128–148 is basic motif; it reads KTERRLAQNREAARKSRLRKK. Residues 154-168 form a leucine-zipper region; sequence LETSRIRLQQIEQEL. The 215-residue stretch at 191 to 405 folds into the DOG1 domain; sequence AVMFDMDYTR…RALSSLWASR (215 aa).

Belongs to the bZIP family. As to quaternary structure, interacts with NPR5/NH4, NH5.1 and NH5.2.

It localises to the nucleus. In terms of biological role, transcriptional regulator involved in defense response. The sequence is that of Transcription factor TGAL5 from Oryza sativa subsp. japonica (Rice).